Reading from the N-terminus, the 432-residue chain is N-acylneuraminate cytidylyltransferase (432 aa).

Substrate-binding residues include Arg39, Asn49, Arg98, Ser107, Ser109, and Gln130. The active site involves Arg188.

The protein belongs to the CMP-NeuNAc synthase family. In terms of assembly, homotetramer; the active enzyme is formed by a dimer of dimers. As to expression, expressed in testis, ovary and liver.

Its subcellular location is the nucleus. The catalysed reaction is an N-acylneuraminate + CTP = a CMP-N-acyl-beta-neuraminate + diphosphate. Its pathway is amino-sugar metabolism; N-acetylneuraminate metabolism. Catalyzes the activation of N-acetylneuraminic acid (NeuNAc) to cytidine 5'-monophosphate N-acetylneuraminic acid (CMP-NeuNAc), a substrate required for the addition of sialic acid. This Oncorhynchus mykiss (Rainbow trout) protein is N-acylneuraminate cytidylyltransferase (cmas).